The following is a 584-amino-acid chain: 2-succinyl-5-enolpyruvyl-6-hydroxy-3-cyclohexene-1-carboxylate synthase (584 aa).

Belongs to the TPP enzyme family. MenD subfamily. Homodimer. Mg(2+) serves as cofactor. Requires Mn(2+) as cofactor. Thiamine diphosphate is required as a cofactor.

It catalyses the reaction isochorismate + 2-oxoglutarate + H(+) = 5-enolpyruvoyl-6-hydroxy-2-succinyl-cyclohex-3-ene-1-carboxylate + CO2. It participates in quinol/quinone metabolism; 1,4-dihydroxy-2-naphthoate biosynthesis; 1,4-dihydroxy-2-naphthoate from chorismate: step 2/7. The protein operates within quinol/quinone metabolism; menaquinone biosynthesis. Functionally, catalyzes the thiamine diphosphate-dependent decarboxylation of 2-oxoglutarate and the subsequent addition of the resulting succinic semialdehyde-thiamine pyrophosphate anion to isochorismate to yield 2-succinyl-5-enolpyruvyl-6-hydroxy-3-cyclohexene-1-carboxylate (SEPHCHC). The protein is 2-succinyl-5-enolpyruvyl-6-hydroxy-3-cyclohexene-1-carboxylate synthase of Bacillus cereus (strain ZK / E33L).